Reading from the N-terminus, the 219-residue chain is MFTFNTIEEALKSLQNGEMIIVTDDENRENEGDLICAAEYATTENVNFMAKYGRGLICMPMGRSLVEKLCLPPMVLKNTDNHETAFTVSIDHVDTTTGISAVERGITARKCIDPNARPEDFRRPGHMFPLQAKDNGVFEREGHTEATVDLMKLAGLREAGLCCEIMADNGEMMRTPELISMAKQYNLTFVTIKDLQAYRRKQEASALAVEQKNMSPMDC.

D-ribulose 5-phosphate-binding positions include 28–29 (RE), aspartate 33, 140–144 (REGHT), and glutamate 164. Glutamate 29 serves as a coordination point for Mg(2+). Histidine 143 is a Mg(2+) binding site.

Belongs to the DHBP synthase family. As to quaternary structure, homodimer. The cofactor is Mg(2+). Mn(2+) serves as cofactor.

The catalysed reaction is D-ribulose 5-phosphate = (2S)-2-hydroxy-3-oxobutyl phosphate + formate + H(+). It functions in the pathway cofactor biosynthesis; riboflavin biosynthesis; 2-hydroxy-3-oxobutyl phosphate from D-ribulose 5-phosphate: step 1/1. In terms of biological role, catalyzes the conversion of D-ribulose 5-phosphate to formate and 3,4-dihydroxy-2-butanone 4-phosphate. The sequence is that of 3,4-dihydroxy-2-butanone 4-phosphate synthase from Methanocorpusculum labreanum (strain ATCC 43576 / DSM 4855 / Z).